Reading from the N-terminus, the 157-residue chain is Ribosome maturation factor RimP (157 aa).

It belongs to the RimP family.

It is found in the cytoplasm. Its function is as follows. Required for maturation of 30S ribosomal subunits. This Helicobacter hepaticus (strain ATCC 51449 / 3B1) protein is Ribosome maturation factor RimP.